A 377-amino-acid polypeptide reads, in one-letter code: Nitric oxide reductase FlRd-NAD(+) reductase (377 aa).

The protein belongs to the FAD-dependent oxidoreductase family. It depends on FAD as a cofactor.

Its subcellular location is the cytoplasm. The catalysed reaction is 2 reduced [nitric oxide reductase rubredoxin domain] + NAD(+) + H(+) = 2 oxidized [nitric oxide reductase rubredoxin domain] + NADH. It functions in the pathway nitrogen metabolism; nitric oxide reduction. Its function is as follows. One of at least two accessory proteins for anaerobic nitric oxide (NO) reductase. Reduces the rubredoxin moiety of NO reductase. In Salmonella schwarzengrund (strain CVM19633), this protein is Nitric oxide reductase FlRd-NAD(+) reductase.